Here is a 1196-residue protein sequence, read N- to C-terminus: ATP-dependent helicase/deoxyribonuclease subunit B (1196 aa).

Residues Cys823, Cys1149, Cys1152, and Cys1158 each contribute to the [4Fe-4S] cluster site.

Belongs to the helicase family. AddB/RexB type 2 subfamily. As to quaternary structure, heterodimer of AddA and RexB. Mg(2+) is required as a cofactor. The cofactor is [4Fe-4S] cluster.

In terms of biological role, the heterodimer acts as both an ATP-dependent DNA helicase and an ATP-dependent, dual-direction single-stranded exonuclease. Recognizes the chi site generating a DNA molecule suitable for the initiation of homologous recombination. This subunit has 5' -&gt; 3' nuclease activity but not helicase activity. This Enterococcus faecalis (strain ATCC 700802 / V583) protein is ATP-dependent helicase/deoxyribonuclease subunit B.